Consider the following 357-residue polypeptide: Sulfate/thiosulfate import ATP-binding protein CysA (357 aa).

Positions 3-237 (ITIQNLNKHF…PENAFVTEFL (235 aa)) constitute an ABC transporter domain. Position 35 to 42 (35 to 42 (GPSGCGKT)) interacts with ATP.

It belongs to the ABC transporter superfamily. Sulfate/tungstate importer (TC 3.A.1.6) family. In terms of assembly, the complex is composed of two ATP-binding proteins (CysA), two transmembrane proteins (CysT and CysW) and a solute-binding protein (CysP).

Its subcellular location is the cell inner membrane. The enzyme catalyses sulfate(out) + ATP + H2O = sulfate(in) + ADP + phosphate + H(+). It catalyses the reaction thiosulfate(out) + ATP + H2O = thiosulfate(in) + ADP + phosphate + H(+). Functionally, part of the ABC transporter complex CysAWTP involved in sulfate/thiosulfate import. Responsible for energy coupling to the transport system. The sequence is that of Sulfate/thiosulfate import ATP-binding protein CysA from Neisseria meningitidis serogroup B (strain ATCC BAA-335 / MC58).